The primary structure comprises 289 residues: Syntaxin-3 (289 aa).

Residues 1-263 are Cytoplasmic-facing; it reads MKDRLEQLKA…VKYQSQARKK (263 aa). Residues 32 to 111 are a coiled coil; sequence MDEFFSEIEE…IEEDEVRSSA (80 aa). Residues 191–253 enclose the t-SNARE coiled-coil homology domain; it reads LSEIEGRHKD…EKARDETKKA (63 aa). Residues 264 to 284 form a helical; Anchor for type IV membrane protein membrane-spanning segment; the sequence is LIIIIVLVVVLLGILALIIGL. Residues 285 to 289 lie on the Extracellular side of the membrane; the sequence is SVGLN.

Belongs to the syntaxin family. Interacts with REEP6. Interacts with PRPH2 in rod and cone photoreceptors. Interacts with ROM1. Interacts with SNAP25. Interacts with VAMP2. As to quaternary structure, interacts with IPO5. Expressed in small intestine, kidney, pancreas, placenta as well as in retina. Weaker expression in lung, liver and heart. Not expressed in brain and skeletal muscle. In terms of tissue distribution, expressed only in the retina. As to expression, ubiquitously expressed.

Its subcellular location is the apical cell membrane. It localises to the nucleus. Its function is as follows. Potentially involved in docking of synaptic vesicles at presynaptic active zones. Apical receptor involved in membrane fusion of apical vesicles. Functionally, essential for survival of retinal photoreceetors. In terms of biological role, functions as a regulator of gene expression. This Homo sapiens (Human) protein is Syntaxin-3 (STX3).